A 213-amino-acid polypeptide reads, in one-letter code: Putative 3-methyladenine DNA glycosylase (213 aa).

It belongs to the DNA glycosylase MPG family.

This Latilactobacillus sakei subsp. sakei (strain 23K) (Lactobacillus sakei subsp. sakei) protein is Putative 3-methyladenine DNA glycosylase.